The chain runs to 255 residues: Type III pantothenate kinase (255 aa).

An ATP-binding site is contributed by 6–13 (DVGNTNIV). Substrate is bound by residues Tyr-100 and 107–110 (GADR). The active-site Proton acceptor is the Asp-109. Asp-129 contributes to the K(+) binding site. Thr-132 provides a ligand contact to ATP. Thr-184 serves as a coordination point for substrate.

This sequence belongs to the type III pantothenate kinase family. Homodimer. Requires NH4(+) as cofactor. The cofactor is K(+).

The protein resides in the cytoplasm. It carries out the reaction (R)-pantothenate + ATP = (R)-4'-phosphopantothenate + ADP + H(+). It functions in the pathway cofactor biosynthesis; coenzyme A biosynthesis; CoA from (R)-pantothenate: step 1/5. In terms of biological role, catalyzes the phosphorylation of pantothenate (Pan), the first step in CoA biosynthesis. The protein is Type III pantothenate kinase of Caldanaerobacter subterraneus subsp. tengcongensis (strain DSM 15242 / JCM 11007 / NBRC 100824 / MB4) (Thermoanaerobacter tengcongensis).